Here is a 56-residue protein sequence, read N- to C-terminus: MIKVKLVRSLICCNPTQRATVAALGLRKVGSEKTFKDDAAIRGMINKVKHLIEVSE.

Belongs to the universal ribosomal protein uL30 family. In terms of assembly, part of the 50S ribosomal subunit.

This is Large ribosomal subunit protein uL30 from Nitratidesulfovibrio vulgaris (strain ATCC 29579 / DSM 644 / CCUG 34227 / NCIMB 8303 / VKM B-1760 / Hildenborough) (Desulfovibrio vulgaris).